The chain runs to 153 residues: Endoribonuclease YbeY (153 aa).

Zn(2+)-binding residues include His114, His118, and His124.

Belongs to the endoribonuclease YbeY family. The cofactor is Zn(2+).

The protein localises to the cytoplasm. Functionally, single strand-specific metallo-endoribonuclease involved in late-stage 70S ribosome quality control and in maturation of the 3' terminus of the 16S rRNA. In Shewanella oneidensis (strain ATCC 700550 / JCM 31522 / CIP 106686 / LMG 19005 / NCIMB 14063 / MR-1), this protein is Endoribonuclease YbeY.